A 374-amino-acid chain; its full sequence is MQVIVALAALGSLAAPALGFSIPRGVPVSQSMIDVKLSSTGNSMVKATITNNGNRALNLLKFHTIMDSNPTRKVSIESEDGKEIQFTGMMPTYKEKDLKPSYFIFLPPKGTVEHSFDIARTHDLSRGGKFTLKAEGMVPIAEENGTEITGAAKYHSNELHMTIDGEKAASVENAFGIVKRGPLTRINKRTSIDMQSCGNNQELQALTAALKASAQLSSMSAQAVSQNQDKYMEYFKDPQYMQTVQSRFQAVAQESSSTTGGGTTYHCSDTMGGCEEGVLAYTLPSQNEVFNCPIYYSDLPPLSNECHAQDQATTTLHELTHNPAVQEPFCEDNGYGYERATALSAEKAVQNADSYALFANGKLNLITLMLIDPD.

The signal sequence occupies residues 1-19; that stretch reads MQVIVALAALGSLAAPALG. Residues 20 to 189 constitute a propeptide that is removed on maturation; it reads FSIPRGVPVS…RGPLTRINKR (170 aa). 2 disulfide bridges follow: C197–C267 and C274–C292. Position 317 (H317) interacts with Zn(2+). E318 is a catalytic residue. 2 residues coordinate Zn(2+): H321 and D332.

This sequence belongs to the peptidase M35 family. It depends on Zn(2+) as a cofactor.

It localises to the secreted. The catalysed reaction is Preferential cleavage of bonds with hydrophobic residues in P1'. Also 3-Asn-|-Gln-4 and 8-Gly-|-Ser-9 bonds in insulin B chain.. Functionally, probable secreted metalloprotease that shows high activities on basic nuclear substrates such as histone and protamine. May be involved in virulence. The protein is Probable neutral protease 2 homolog TRV_05367 of Trichophyton verrucosum (strain HKI 0517).